The sequence spans 229 residues: MSQPRPLLSPPETEEQLLAQAQQLSGYTLGELAALDGLVTPENLKRDKGWIGVLLEIWLGASAGSKPEQDFAALGVELKTIPVDSLGRPLETTFVCVARLTGNSGVTWETSHVRHKLKRVLWIPVEGERSIPLAQRRVGSPLLWSPNEEEDRQLREDWEELMDMIVLGQVERITARHGEYLQIRPKAANAKALTEAIGARGERILTLPRGFYLKKNFTSALLARHFLIQ.

This sequence belongs to the MutH family.

It localises to the cytoplasm. Sequence-specific endonuclease that cleaves unmethylated GATC sequences. It is involved in DNA mismatch repair. This Shigella flexneri serotype 5b (strain 8401) protein is DNA mismatch repair protein MutH.